The sequence spans 561 residues: uncharacterized protein (561 aa).

Positions 1–24 (MELGAWRSILYIAFLFAITRHAFC) are cleaved as a signal peptide. Residues 25 to 509 (KAVNLVHSPE…GYVYLSEIKQ (485 aa)) are Lumenal-facing. A helical transmembrane segment spans residues 510–530 (YSSLILISLWISLILFVSFLN). The Cytoplasmic segment spans residues 531-561 (RRLILHYSFESVHQLKTLTRKFIYSSLLKQD).

The protein localises to the endoplasmic reticulum membrane. The protein resides in the golgi apparatus membrane. This is an uncharacterized protein from Schizosaccharomyces pombe (strain 972 / ATCC 24843) (Fission yeast).